We begin with the raw amino-acid sequence, 437 residues long: Adenylosuccinate synthetase (437 aa).

Residues 12-18 and 40-42 each bind GTP; these read GDEGKGK and GHT. Asp13 serves as the catalytic Proton acceptor. Residues Asp13 and Gly40 each contribute to the Mg(2+) site. Residues 13–16, 38–41, Thr128, Arg142, Gln223, Thr238, and Arg302 contribute to the IMP site; these read DEGK and NAGH. The active-site Proton donor is His41. 298 to 304 is a substrate binding site; it reads TTTGRRR. Residues Arg304, 330–332, and 412–414 each bind GTP; these read KLD and SLG.

Belongs to the adenylosuccinate synthetase family. As to quaternary structure, homodimer. The cofactor is Mg(2+).

It is found in the cytoplasm. It carries out the reaction IMP + L-aspartate + GTP = N(6)-(1,2-dicarboxyethyl)-AMP + GDP + phosphate + 2 H(+). It participates in purine metabolism; AMP biosynthesis via de novo pathway; AMP from IMP: step 1/2. Functionally, plays an important role in the de novo pathway of purine nucleotide biosynthesis. Catalyzes the first committed step in the biosynthesis of AMP from IMP. The chain is Adenylosuccinate synthetase from Prochlorococcus marinus (strain MIT 9211).